The following is a 504-amino-acid chain: FAD-dependent monooxygenase nsrK (504 aa).

Residue Arg-146 coordinates FAD. Arg-227 is a catalytic residue. FAD contacts are provided by Asp-340 and Gly-353.

Belongs to the paxM FAD-dependent monooxygenase family. Requires FAD as cofactor.

Its pathway is secondary metabolite biosynthesis. Its function is as follows. FAD-dependent monooxygenase; part of the gene cluster that mediates the biosynthesis of the tetrahydroxanthone dimer neosartorin, which exhibits antibacterial activity. The two different monomeric units appear to be synthesized by the same set of enzymes, among which the Baeyer-Villiger monooxygenase nsrF is the key enzyme for the divergence of the biosynthetic routes. The pathway begins with the synthesis of atrochrysone thioester by the polyketide synthase nsrB. The atrochrysone carboxyl ACP thioesterase nsrC then breaks the thioester bond and releases the atrochrysone carboxylic acid from AacuL. Atrochrysone carboxylic acid is decarboxylated by the decarboxylase nsrE, and oxidized by the anthrone oxygenase nsrD to yield emodin. Emodin is then reduced to emodin hydroquinone by the oxidoreductase nsrR. A-ring reduction by the short chain dehydrogenase nsrJ, dehydration by the scytalone dehydratase-like protein nsrI and probable spontaneous re-oxidation, results in overall deoxygenation to chrysophanol. The Baeyer-Villiger monooxygenase nsrF accepts chrysophanol as a substrate to insert one oxygen atom at two different positions to yield the precursors of both monomric units. NsrF is promiscuous/flexible in interacting with the 2 (non methylated and methylated) aromatic rings of chrysophanol, thus diverging the biosynthetic pathway at this point. After the hydrolysis of the lactones, methylesterification by the methyltransferase nsrG yields respectively moniliphenone and 2,2',6'-trihydroxy-4-methyl-6-methoxya-cyldiphenylmethanone. The next steps are the hydroxylation by the FAD-dependent monooxygenase nsrK, followed by isomerization by the monooxygenase nsrQ. The short chain dehydrogenase/reductase nsrO then catalyzes the C-5 ketoreduction to give the xanthone skeleton of blennolide C and 5-acetylblennolide A. The acetyltransferase nsrL has a strict substrate specificity and uses only blennolide A but not blennolide C to yield 5-acetylblennolide A as the single-acetylated product. In the final step of the biosynthesis, the heterodimerization of the 2 xanthones, blennolide C and 5-acetylblennolide A, is catalyzed by the cytochrome P450 monooxygenase nsrP. NsrP can utilize at least three different xanthones as its substrates to perform the dimerization reaction. The polypeptide is FAD-dependent monooxygenase nsrK (Aspergillus novofumigatus (strain IBT 16806)).